The primary structure comprises 54 residues: Insulin (54 aa).

Disulfide bonds link C7–C39, C19–C52, and C38–C43.

Belongs to the insulin family. In terms of assembly, heterodimer of a B chain and an A chain linked by two disulfide bonds.

The protein localises to the secreted. Functionally, insulin decreases blood glucose concentration. It increases cell permeability to monosaccharides, amino acids and fatty acids. It accelerates glycolysis, the pentose phosphate cycle, and glycogen synthesis in liver. This Squalus acanthias (Spiny dogfish) protein is Insulin (ins).